Here is a 1083-residue protein sequence, read N- to C-terminus: Voltage-gated inwardly rectifying potassium channel KCNH3 (1083 aa).

The Cytoplasmic segment spans residues 1–228 (MPAMRGLLAP…HCGALRATWD (228 aa)). The 73-residue stretch at 18–90 (IATRFDGTHS…QQIRKALDEH (73 aa)) folds into the PAS domain. The PAC domain maps to 93 to 145 (FKAELILYRKSGLPFWCLLDVIPIKNEKGEVALFLVSHKDISETKNRGGPDRW). A compositionally biased stretch (basic and acidic residues) spans 137–150 (KNRGGPDRWKETGG). A disordered region spans residues 137-157 (KNRGGPDRWKETGGGRRRYGR). The chain crosses the membrane as a helical span at residues 229–249 (GFILLATLYVAVTVPYSVCVS). Residues 250-259 (TAREPSAARG) are Extracellular-facing. A helical transmembrane segment spans residues 260–280 (PPSVCDLAVEVLFILDIVLNF). Residues 281–302 (RTTFVSKSGQVVFAPKSICLHY) are Cytoplasmic-facing. The helical transmembrane segment at 303–323 (VTTWFLLDVIAALPFDLLHAF) threads the bilayer. The Extracellular portion of the chain corresponds to 324–331 (KVNVYFGA). The helical; Voltage-sensor transmembrane segment at 332-352 (HLLKTVRLLRLLRLLPRLDRY) threads the bilayer. Residues 353–361 (SQYSAVVLT) lie on the Cytoplasmic side of the membrane. A helical membrane pass occupies residues 362–382 (LLMAVFALLAHWVACVWFYIG). Residues 383 to 453 (QREIESSESE…GGPSLRSAYI (71 aa)) lie on the Extracellular side of the membrane. N-linked (GlcNAc...) asparagine glycans are attached at residues asparagine 421, asparagine 428, and asparagine 436. Positions 454–474 (TSLYFALSSLTSVGFGNVSAN) form an intramembrane region, pore-forming. A Selectivity filter motif is present at residues 465–470 (SVGFGN). Residues 475–479 (TDTEK) are Extracellular-facing. The chain crosses the membrane as a helical span at residues 480–500 (IFSICTMLIGALMHAVVFGNV). The Cytoplasmic portion of the chain corresponds to 501–1083 (TAIIQRMYAR…QWTQEEGTGV (583 aa)). An a nucleoside 3',5'-cyclic phosphate-binding site is contributed by 582 to 697 (LFEAASRGCL…FAPRFSRGLR (116 aa)). Disordered regions lie at residues 729–810 (EEKE…LRLP), 832–873 (CGSD…SEAR), and 972–1055 (MAPW…ALPW). Basic residues predominate over residues 773–785 (TAPRPRLGGRGRP). Residues 844–861 (GQSGPECSSSPSPGPESG) are compositionally biased toward low complexity.

The protein belongs to the potassium channel family. H (Eag) (TC 1.A.1.20) subfamily. Kv12.2/KCNH3 sub-subfamily. The potassium channel is probably composed of a homo- or heterotetrameric complex of pore-forming alpha subunits that can associate with modulating beta subunits. Interacts with KCNE1 and KCNE3; these interactions regulate KCNH3 trafficking to the plasma membrane and its subsequent voltage-gated potassium channel activity. N-glycosylated. N-glycosylation mediates traffick to the cell membrane but is not necessary for voltage-gated potassium channel activity. In terms of tissue distribution, detected only in brain, in particular in the telencephalon. Detected in the cerebral cortex, occipital pole, frontal and temporal lobe, putamen, amygdala, hippocampus and caudate nucleus.

Its subcellular location is the cell membrane. It carries out the reaction K(+)(in) = K(+)(out). Its function is as follows. Pore-forming (alpha) subunit of a voltage-gated inwardly rectifying potassium channel. Charactherized by a fast rate of activation during depolarization followed by a rapid inactivation at much more depolarized value causing inward rectification due to a C-type inactivation mechanism. Exhibits a rapid recovery from inactivation. This is Voltage-gated inwardly rectifying potassium channel KCNH3 from Homo sapiens (Human).